A 489-amino-acid polypeptide reads, in one-letter code: NADH-quinone oxidoreductase subunit N (489 aa).

The next 14 membrane-spanning stretches (helical) occupy residues 8–28 (LIAM…MLSI), 35–55 (FTIA…LYYV), 75–95 (FFTA…YPWL), 105–125 (FYML…AHHL), 127–147 (SMFI…GYAF), 159–179 (YMLL…LLYA), 203–223 (VLAG…LFPF), 235–255 (PAPT…AVVM), 271–291 (MILG…ALTQ), 303–323 (VSHL…PILA), 329–349 (IYLA…AVAS), 374–394 (AVVM…LGFI), 407–427 (SLWW…FYYL), and 456–476 (LITL…QPLI).

It belongs to the complex I subunit 2 family. As to quaternary structure, NDH-1 is composed of 13 different subunits. Subunits NuoA, H, J, K, L, M, N constitute the membrane sector of the complex.

It is found in the cell inner membrane. The catalysed reaction is a quinone + NADH + 5 H(+)(in) = a quinol + NAD(+) + 4 H(+)(out). Functionally, NDH-1 shuttles electrons from NADH, via FMN and iron-sulfur (Fe-S) centers, to quinones in the respiratory chain. The immediate electron acceptor for the enzyme in this species is believed to be ubiquinone. Couples the redox reaction to proton translocation (for every two electrons transferred, four hydrogen ions are translocated across the cytoplasmic membrane), and thus conserves the redox energy in a proton gradient. This Proteus mirabilis (strain HI4320) protein is NADH-quinone oxidoreductase subunit N.